The following is a 108-amino-acid chain: UPF0235 protein RPB_0109 (108 aa).

This sequence belongs to the UPF0235 family.

This chain is UPF0235 protein RPB_0109, found in Rhodopseudomonas palustris (strain HaA2).